The sequence spans 50 residues: Large ribosomal subunit protein bL33 (50 aa).

Belongs to the bacterial ribosomal protein bL33 family.

The chain is Large ribosomal subunit protein bL33 from Endomicrobium trichonymphae.